The chain runs to 198 residues: N-acetyltransferase 9-like protein (198 aa).

In terms of domain architecture, N-acetyltransferase spans 34–178 (EEIRRLTGSE…KEITMELPGE (145 aa)).

It belongs to the acetyltransferase family. GNAT subfamily.

The protein is N-acetyltransferase 9-like protein of Caenorhabditis briggsae.